Here is a 283-residue protein sequence, read N- to C-terminus: BTB/POZ domain-containing protein KCTD15 (283 aa).

Residues 1–33 (MPHRKERPSGSSLNAHGSSGTAEGGNMSRLSLT) are disordered. Residues 9-21 (SGSSLNAHGSSGT) are compositionally biased toward polar residues. Ser-31, Ser-35, and Ser-38 each carry phosphoserine. One can recognise a BTB domain in the interval 56–126 (APVHIDVGGH…LRTSKLLLPD (71 aa)).

As to quaternary structure, forms oligomers, predominantly homopentamers. Interacts with KCTD1, probably forming heteropentamers depending on its abundance in a cell-type dependent manner. Interacts with TFAP2A; this interaction inhibits TFAP2A transcriptional activation. Expressed in the cerebral cortex, cerebellum, and hypothalamus (at protein level). Expressed in the arcuate hypothalamic nucleus, the ventromedial hypothalamic nucleus and the accumbens nucleus of the ventral striatum.

It is found in the nucleus. Functionally, during embryonic development, interferes with neural crest formation. Inhibits AP2 transcriptional activity by interaction with its activation domain. This is BTB/POZ domain-containing protein KCTD15 (Kctd15) from Mus musculus (Mouse).